A 258-amino-acid polypeptide reads, in one-letter code: MTLPYYASAEQIMRDKTELARKGIARGRSVVVLTYDKGVLFVAENPSATLHKVSELYDRIGFAAVGKYNEFESLRRGGILQADLRGYQYDRRDVTGRALANAYAQALGTVFNDQLKPFEVEICVAEVGYPEQSPEAVLYRINFDGAIVDEREFVVMGGTTEPIVAALKDSYQPGLDLSSAVGVAVQALQASGPEGADKEKRTIGVSQLEVATLEQARPRRAFRRVTKTALEQLLVGNGVDTSVGKATTTVELPEEPAE.

It belongs to the peptidase T1A family. As to quaternary structure, the 20S proteasome core is composed of 14 alpha and 14 beta subunits that assemble into four stacked heptameric rings, resulting in a barrel-shaped structure. The two inner rings, each composed of seven catalytic beta subunits, are sandwiched by two outer rings, each composed of seven alpha subunits. The catalytic chamber with the active sites is on the inside of the barrel. Has a gated structure, the ends of the cylinder being occluded by the N-termini of the alpha-subunits. Is capped by the proteasome-associated ATPase, ARC.

The protein resides in the cytoplasm. The protein operates within protein degradation; proteasomal Pup-dependent pathway. With respect to regulation, the formation of the proteasomal ATPase ARC-20S proteasome complex, likely via the docking of the C-termini of ARC into the intersubunit pockets in the alpha-rings, may trigger opening of the gate for substrate entry. Interconversion between the open-gate and close-gate conformations leads to a dynamic regulation of the 20S proteasome proteolysis activity. In terms of biological role, component of the proteasome core, a large protease complex with broad specificity involved in protein degradation. The protein is Proteasome subunit alpha of Nocardia farcinica (strain IFM 10152).